Here is a 121-residue protein sequence, read N- to C-terminus: Large ribosomal subunit protein bL12 (121 aa).

Belongs to the bacterial ribosomal protein bL12 family. As to quaternary structure, homodimer. Part of the ribosomal stalk of the 50S ribosomal subunit. Forms a multimeric L10(L12)X complex, where L10 forms an elongated spine to which 2 to 4 L12 dimers bind in a sequential fashion. Binds GTP-bound translation factors.

In terms of biological role, forms part of the ribosomal stalk which helps the ribosome interact with GTP-bound translation factors. Is thus essential for accurate translation. In Clostridioides difficile (strain 630) (Peptoclostridium difficile), this protein is Large ribosomal subunit protein bL12.